A 2542-amino-acid chain; its full sequence is MDSKNLVDENCNKVAIIGIGFRFPNLKGDITPNELWSKLLNRYDGIVKNDRWNESFFKSGDISTNYAGFIPFEELKSFDPLFFGINPSEGIHMCPQQRLLLKCTWEALEDSGIDPIEIRGSNTSVFIGCSGADYQNLNKNDNKVQQEIFSSSTHSISNRVSYCFDLHGESMTIDTACSSSSNAIRRGYKSIIDGSSNISVVGGINILLDPNISKSYSRLNILSKDGKCKSFDAGADGYVRSDAAGIAILKNLNDAIKDDNNIYCVIDGSASNVDGNGFSDKSNFYSPSKSSQVECIRLALESTNGQVNENDIVYFEAHGTGTPTGDPIELESVSIALKTSENRSSDNPLLIGSFKPNIGHTESASGISSLIKCCLILKNQCFVPNLNFNKPNPLIKFDQWNLKVVTDPIDFSTLNYINKRVSIAINNFGVTGSNCCLIVSSFKGNQIRNNINNKSKSPKQYLIPFSTNSIKSLDLYKSRIDNNVEFKEFAENQIKSKSKKLIQRSVVIASNWDEFNLKSNTINTSNDKLTSNMLVSSNKKNVTMVFVFCGQGAQYSTMAKNLYDNEPIFKKSMDKIDSKLNEYYGFSILEKLRSFNENDLKGIQYSIIAQPSTCMVQISLFELYCHWGIKPSIIVGHSLGEISSSYCSGMIDLDTFCYLIYHRSMVQSKTNGLGRMLSISIGENEYNSKYSSRYPELEIACYNSPSSIVIAGKELILNEIIKELKKDGVFCAILGSPTSFHTSSQLSVKDEILKISFKSKQPTIPIFSTVTTNLYDEMNPFDTKYVYDNIINPVRFTNTISNIYKHIELNYSVNNNSNEVIFIEIAPHPTLSFYLKQMVPEDKKQSVSIFSPLSKKKSNDLFEIQKLISELYCLGYNGIGFNIQLSDHNNTNNQTRVNLPLYQWEDQEYWKLDNLHQYHLSNGPSINHLGISNSNHTPIKSYQTHINIQKKPFQWLKGHQIKGKYYFPGCGYIDNILKIFGESKTDTNPNKELPDILISFIEFKTPLIFMDGISQCLQTNIHSTGKKEYKALFHFKDEKSSSDWVQTSTANFQLFSRGPNLNEDDEQSLFMYNINDLISNQCNLTKLSKQELYSHIKTKCGLNYSGDFQRVDKCYLGYNCSLSEISIIQGVNENRSTFFDSSIIDCCLHGSIGLIDENCQLVFEKLEELTYYSSKVPKTTSQHSKIYVYSKLKPRIGDSYSASIIVMLENGTVLFEMENASFKSTTKIKDPLAMEYPTNEIYSCNLQSKDSLIPSLSSFDHIFKRKIPNEYVDQINIYESFIPKLLFSNINKRCPEITIDEIQSSEIEQLLLKYYKIKEDNDNKWLSRLFTFAFESIKQWYHNEDYDFENVLSPHNFKIFSKSTKIISKLLFPLENDNDEDSPQSLFEGGLLDKFYSSGFSAQNELVGEIIQESIKPILNEKLVFRILEFGGGVGSLSLLVLEKINSLLIQYPNYQIDIEYTWSDISPSFITEAKAKFEKFNDRFNIIYKALNLEQPLIGEKQGLKPQYFDYIIMFNVLHVIKDVKYGVEQIYQLLVPNGHLLFIEPIYKSIIGDGIFGVFDQWWSFQDTEIRKDRCCMKQKTWYKLLKSVNFNDDIRMTPELTCFVIQAQKPSISNLSFSKSETTNYDSIIVFGNKYASNLSNHFIKSIDNGNLQFISTIEELNKIGKYISNESIIYFIKSIDELSVDNFVNITHEYTQINQKLMELNCKCKHVLITNDSTTTNYLSSSLIGAARYYHECPLELFILNFDTPSIIENQNLFKTIEPLINSSINIQREFIINNHKVYYERIKNETKLKSIFKNSSSFESLEQVDNFMISLTPNLEYKVKVKPTSILKENEVEIKVMSTGLNYKDYLIYAGLVESVEPIFGIEFSGIITRISTGSKEFKVGDHVYGIGKSTTSSHIITDIDVISHKPSNISHSEASSIPVVYLTSYHSLYNIGALKNNETILIHSATGGVGLSTLEILKWKGHSGLIFVTVGSNEKEEYLRENYGDMISGIYSTRNKNFVKQIKSKISKLNPFGKSGVDFILNTLSSSDYMDSNFKCLNMSGRIVDLSITHLNSNEFTDNKKFKYNYGYHNIELQYVDKKIIKSTLSIISNAVSSNDLQLIPITHYSIEKVKESIEFINERVHMGKIIINHENQDSIINELIEKQKSINKFDQSIFKQNYKLEPSLLGRNILLTGQSGIVLEILKWILRNSENNSIGNIIILSKSSIKWEMEYLINKVKLINKLGNFFNNIKFHFKSVDISDSGLIDESINKLLIENPDINNIDSIFHFAYTQATCNSDEVDLHHLTQSHSAKSMGAINLHNQSIKRNWKLKNFIMSSSVSSKTSTANQCGYISSNNVLDALSKYRISIGLPTICTNYGLIESTGFVSRNESVAALLSGEGFIPISANLILGTLDLQLQNQAQSSNLILSNFNFTSLNGLPQKSLISKFDYQININEENEKSKSLLKDDNVELTVDQLITFKISEILSTDILKLNKDIILVDYGIDSLVIIQLKNWVDKEFSIPNELTIQKIQNSTINSFIQLVKNSMDKNKK.

One can recognise a Ketosynthase family 3 (KS3) domain in the interval 11-441 (CNKVAIIGIG…GSNCCLIVSS (431 aa)). Catalysis depends on for beta-ketoacyl synthase activity residues Cys-177, His-318, and His-360. Residues 628–661 (GIKPSIIVGHSLGEISSSYCSGMIDLDTFCYLIY) form an acyl/malonyl transferase region. Catalysis depends on Ser-638, which acts as the For acyl/malonyl transferase activity. The segment at 926–1059 (INHLGISNSN…ANFQLFSRGP (134 aa)) is N-terminal hotdog fold. In terms of domain architecture, PKS/mFAS DH spans 926 to 1231 (INHLGISNSN…FKSTTKIKDP (306 aa)). His-959 acts as the Proton acceptor; for dehydratase activity in catalysis. The tract at residues 1083 to 1231 (NLTKLSKQEL…FKSTTKIKDP (149 aa)) is C-terminal hotdog fold. Asp-1145 acts as the Proton donor; for dehydratase activity in catalysis. Residues 2459–2537 (NVELTVDQLI…SFIQLVKNSM (79 aa)) enclose the Carrier domain. Ser-2496 is modified (O-(pantetheine 4'-phosphoryl)serine).

The cofactor is pantetheine 4'-phosphate.

Functionally, probable polyketide synthase. The sequence is that of Probable polyketide synthase 41 (pks41) from Dictyostelium discoideum (Social amoeba).